Here is a 382-residue protein sequence, read N- to C-terminus: Lipid-A-disaccharide synthase (382 aa).

It belongs to the LpxB family.

It carries out the reaction 2-N,3-O-bis[(3R)-3-hydroxytetradecanoyl]-alpha-D-glucosaminyl 1-phosphate + UDP-2-N,3-O-bis[(3R)-3-hydroxytetradecanoyl]-alpha-D-glucosamine = lipid A disaccharide (E. coli) + UDP + H(+). It catalyses the reaction a lipid X + a UDP-2-N,3-O-bis[(3R)-3-hydroxyacyl]-alpha-D-glucosamine = a lipid A disaccharide + UDP + H(+). It participates in glycolipid biosynthesis; lipid IV(A) biosynthesis; lipid IV(A) from (3R)-3-hydroxytetradecanoyl-[acyl-carrier-protein] and UDP-N-acetyl-alpha-D-glucosamine: step 5/6. Functionally, condensation of UDP-2,3-diacylglucosamine and 2,3-diacylglucosamine-1-phosphate to form lipid A disaccharide, a precursor of lipid A, a phosphorylated glycolipid that anchors the lipopolysaccharide to the outer membrane of the cell. This Salmonella typhimurium (strain LT2 / SGSC1412 / ATCC 700720) protein is Lipid-A-disaccharide synthase.